The primary structure comprises 195 residues: Imidazoleglycerol-phosphate dehydratase (195 aa).

The protein belongs to the imidazoleglycerol-phosphate dehydratase family.

It is found in the cytoplasm. The catalysed reaction is D-erythro-1-(imidazol-4-yl)glycerol 3-phosphate = 3-(imidazol-4-yl)-2-oxopropyl phosphate + H2O. The protein operates within amino-acid biosynthesis; L-histidine biosynthesis; L-histidine from 5-phospho-alpha-D-ribose 1-diphosphate: step 6/9. This is Imidazoleglycerol-phosphate dehydratase from Bordetella petrii (strain ATCC BAA-461 / DSM 12804 / CCUG 43448).